The sequence spans 494 residues: Cytochrome P450 2G1 (494 aa).

Position 439 (cysteine 439) interacts with heme.

The protein belongs to the cytochrome P450 family. Heme is required as a cofactor. As to expression, olfactory epithelium.

It is found in the endoplasmic reticulum membrane. Its subcellular location is the microsome membrane. The catalysed reaction is an organic molecule + reduced [NADPH--hemoprotein reductase] + O2 = an alcohol + oxidized [NADPH--hemoprotein reductase] + H2O + H(+). Cytochromes P450 are a group of heme-thiolate monooxygenases. This isozyme seems to be implicated in olfaction. The sequence is that of Cytochrome P450 2G1 (CYP2G1) from Oryctolagus cuniculus (Rabbit).